A 468-amino-acid polypeptide reads, in one-letter code: Putative amidase AmiC (468 aa).

Catalysis depends on charge relay system residues lysine 80 and serine 155. The Acyl-ester intermediate role is filled by serine 179.

The protein belongs to the amidase family.

It catalyses the reaction a monocarboxylic acid amide + H2O = a monocarboxylate + NH4(+). This Mycobacterium leprae (strain TN) protein is Putative amidase AmiC (amiC).